We begin with the raw amino-acid sequence, 249 residues long: Inner membrane protein pE248R (249 aa).

Gly-2 carries the N-myristoyl glycine; by host lipid modification. At 2 to 199 (GGSTSKNSFK…ADAISAVFKN (198 aa)) the chain is on the cytoplasmic side. A helical membrane pass occupies residues 200–220 (IMVAAVVIVVIIVGFIAVFYF). Residues 221 to 249 (LHSRHRHEEEEEAEPLITSKILKNAAVSQ) lie on the Extracellular side of the membrane.

The protein belongs to the asfivirus E248R family. Interacts with A151R.

The protein resides in the host membrane. It localises to the virion membrane. In terms of biological role, essential for viral fusion with host endosomal membrane and core release. The protein is Inner membrane protein pE248R of African swine fever virus (isolate Pig/Kenya/KEN-50/1950) (ASFV).